We begin with the raw amino-acid sequence, 158 residues long: NAD(P)H-quinone oxidoreductase subunit J, chloroplastic (158 aa).

This sequence belongs to the complex I 30 kDa subunit family. NDH is composed of at least 16 different subunits, 5 of which are encoded in the nucleus.

It localises to the plastid. It is found in the chloroplast thylakoid membrane. The enzyme catalyses a plastoquinone + NADH + (n+1) H(+)(in) = a plastoquinol + NAD(+) + n H(+)(out). It catalyses the reaction a plastoquinone + NADPH + (n+1) H(+)(in) = a plastoquinol + NADP(+) + n H(+)(out). NDH shuttles electrons from NAD(P)H:plastoquinone, via FMN and iron-sulfur (Fe-S) centers, to quinones in the photosynthetic chain and possibly in a chloroplast respiratory chain. The immediate electron acceptor for the enzyme in this species is believed to be plastoquinone. Couples the redox reaction to proton translocation, and thus conserves the redox energy in a proton gradient. The polypeptide is NAD(P)H-quinone oxidoreductase subunit J, chloroplastic (Platanus occidentalis (Sycamore)).